The primary structure comprises 108 residues: uncharacterized protein (108 aa).

Residues 1 to 10 (MSGISLTPVK) are compositionally biased toward polar residues. Disordered regions lie at residues 1 to 63 (MSGI…RPPR) and 83 to 108 (VLSPRYDLSDEPHAPGTTMISGPRTQ). The span at 33–62 (YVDRARPSADAKEHCAASDPEEWHSGDRPP) shows a compositional bias: basic and acidic residues.

This is an uncharacterized protein from Gallid herpesvirus 2 (strain Chicken/Md5/ATCC VR-987) (GaHV-2).